The sequence spans 298 residues: Hydroxymethylglutaryl-CoA lyase, mitochondrial (298 aa).

A Pyruvate carboxyltransferase domain is found at 6–273 (VKVVEVGPRD…HTGVDLQKLM (268 aa)). Arg-14 is a binding site for substrate. Residue Asp-15 coordinates a divalent metal cation. Position 21 is an N6-acetyllysine (Lys-21). A divalent metal cation-binding residues include His-206 and His-208. Cys-239 is an active-site residue. Residue Asn-248 coordinates a divalent metal cation. The Microbody targeting signal motif lies at 296-298 (CRL).

Belongs to the HMG-CoA lyase family. Homodimer; disulfide-linked. Can also form homotetramers.

Its subcellular location is the mitochondrion matrix. It localises to the peroxisome. It catalyses the reaction (3S)-3-hydroxy-3-methylglutaryl-CoA = acetoacetate + acetyl-CoA. It functions in the pathway metabolic intermediate metabolism; (S)-3-hydroxy-3-methylglutaryl-CoA degradation; acetoacetate from (S)-3-hydroxy-3-methylglutaryl-CoA: step 1/1. Functionally, mitochondrial 3-hydroxy-3-methylglutaryl-CoA lyase that catalyzes a cation-dependent cleavage of (S)-3-hydroxy-3-methylglutaryl-CoA into acetyl-CoA and acetoacetate, a key step in ketogenesis. Terminal step in leucine catabolism. Ketone bodies (beta-hydroxybutyrate, acetoacetate and acetone) are essential as an alternative source of energy to glucose, as lipid precursors and as regulators of metabolism. The sequence is that of Hydroxymethylglutaryl-CoA lyase, mitochondrial (HMGCL) from Gallus gallus (Chicken).